A 191-amino-acid polypeptide reads, in one-letter code: Protein RER1A (191 aa).

Met1 is modified (N-acetylmethionine). Helical transmembrane passes span 39-57 (YRWI…RVYY), 60-80 (GFYI…IGFL), 115-135 (FKFW…TFFS), and 136-156 (VFDV…LFVL).

This sequence belongs to the RER1 family.

The protein localises to the membrane. Involved in the retrieval of endoplasmic reticulum membrane proteins from the early Golgi compartment. This Arabidopsis thaliana (Mouse-ear cress) protein is Protein RER1A (RER1A).